Consider the following 322-residue polypeptide: Malate dehydrogenase (322 aa).

NAD(+) is bound by residues glycine 10–glycine 15 and aspartate 34. Arginine 83 and arginine 89 together coordinate substrate. Residues asparagine 96 and isoleucine 119–asparagine 121 each bind NAD(+). Substrate is bound by residues asparagine 121 and arginine 152. Residue histidine 176 is the Proton acceptor of the active site.

This sequence belongs to the LDH/MDH superfamily. MDH type 3 family.

The catalysed reaction is (S)-malate + NAD(+) = oxaloacetate + NADH + H(+). Functionally, catalyzes the reversible oxidation of malate to oxaloacetate. The sequence is that of Malate dehydrogenase from Bradyrhizobium sp. (strain BTAi1 / ATCC BAA-1182).